The following is a 177-amino-acid chain: FANCD2 opposite strand protein (177 aa).

This Homo sapiens (Human) protein is FANCD2 opposite strand protein (FANCD2OS).